A 166-amino-acid chain; its full sequence is Large ribosomal subunit protein mL49 (166 aa).

Positions 56 to 78 are disordered; it reads RIPDPPKHEHYPTPSGWQPPRDP.

Belongs to the mitochondrion-specific ribosomal protein mL49 family. In terms of assembly, component of the mitochondrial large ribosomal subunit (mt-LSU). Mature mammalian 55S mitochondrial ribosomes consist of a small (28S) and a large (39S) subunit. The 28S small subunit contains a 12S ribosomal RNA (12S mt-rRNA) and 30 different proteins. The 39S large subunit contains a 16S rRNA (16S mt-rRNA), a copy of mitochondrial valine transfer RNA (mt-tRNA(Val)), which plays an integral structural role, and 52 different proteins. Interacts with OXA1L. In terms of tissue distribution, ubiquitous.

The protein localises to the mitochondrion. The polypeptide is Large ribosomal subunit protein mL49 (MRPL49) (Homo sapiens (Human)).